Consider the following 447-residue polypeptide: Tektin-4 (447 aa).

Coiled coils occupy residues 114-143, 324-348, and 375-423; these read KSEL…RALD, KILS…DKEA, and FRLM…TNSL.

Belongs to the tektin family. As to quaternary structure, microtubule inner protein component of sperm flagellar doublet microtubules. In terms of processing, ubiquitinated, leading to its degradation. Deubiquitinated by USP16, promoting its stability.

The protein resides in the cytoplasm. Its subcellular location is the cytoskeleton. It localises to the cilium axoneme. It is found in the flagellum axoneme. In terms of biological role, microtubule inner protein (MIP) part of the dynein-decorated doublet microtubules (DMTs) in cilia and flagellar axoneme. Forms filamentous polymers in the walls of ciliary and flagellar microtubules. Contributes to normal sperm motility. This Rattus norvegicus (Rat) protein is Tektin-4 (Tekt4).